The following is a 432-amino-acid chain: Serine--tRNA ligase (432 aa).

Residue 239–241 (TSE) coordinates L-serine. 270-272 (RSE) contacts ATP. Glu-293 serves as a coordination point for L-serine. ATP is bound at residue 357 to 360 (EISS). Position 392 (Ser-392) interacts with L-serine.

The protein belongs to the class-II aminoacyl-tRNA synthetase family. Type-1 seryl-tRNA synthetase subfamily. Homodimer. The tRNA molecule binds across the dimer.

Its subcellular location is the cytoplasm. It carries out the reaction tRNA(Ser) + L-serine + ATP = L-seryl-tRNA(Ser) + AMP + diphosphate + H(+). The enzyme catalyses tRNA(Sec) + L-serine + ATP = L-seryl-tRNA(Sec) + AMP + diphosphate + H(+). Its pathway is aminoacyl-tRNA biosynthesis; selenocysteinyl-tRNA(Sec) biosynthesis; L-seryl-tRNA(Sec) from L-serine and tRNA(Sec): step 1/1. Catalyzes the attachment of serine to tRNA(Ser). Is also able to aminoacylate tRNA(Sec) with serine, to form the misacylated tRNA L-seryl-tRNA(Sec), which will be further converted into selenocysteinyl-tRNA(Sec). The sequence is that of Serine--tRNA ligase from Methylibium petroleiphilum (strain ATCC BAA-1232 / LMG 22953 / PM1).